The sequence spans 220 residues: 1-Cys peroxiredoxin A (220 aa).

One can recognise a Thioredoxin domain in the interval 4-165 (LTIGDTVPNL…VVRAVDALQT (162 aa)). The active-site Cysteine sulfenic acid (-SOH) intermediate is the Cys-46. The Bipartite nuclear localization signal signature appears at 195–218 (KEKFPQGFDTADLPSGKGYLRFTK).

This sequence belongs to the peroxiredoxin family. Prx6 subfamily.

It is found in the nucleus. The protein resides in the cytoplasm. The enzyme catalyses a hydroperoxide + [thioredoxin]-dithiol = an alcohol + [thioredoxin]-disulfide + H2O. Functionally, thiol-specific peroxidase that catalyzes the reduction of hydrogen peroxide and organic hydroperoxides to water and alcohols, respectively. Seems to contribute to the inhibition of germination during stress. The polypeptide is 1-Cys peroxiredoxin A (Oryza sativa subsp. japonica (Rice)).